The primary structure comprises 329 residues: MDPTTPAWGTESTTMNGNDQALPLLCGKETMISVFLILFIALVGLVGNAFVLWLLGFRMRRNAFSVYVLSLAGADFLFLCFQMTSCLAYLINFFGSISINIPSFFTVMTCAYLAGLSMLSAISTERCLSVLWPIWYRCRRPRHLSAVMCVLLWALSLLLSILEGKFCGFLFSDDDPGWCQTFDFITAAWLMFLFVVLCGSSLALLVRILCGSRSLPLTRLYLTILLTVLIFLLCGLPFGIQWFLILWIWKNSVVLFCHIHPISVVLSSFNSSANPIIYFFVGSFRKQWRLRQPILKLALQRALQDTAEVDHSEGCFSQGTLEMSRSSLV.

Topologically, residues 1-33 are extracellular; sequence MDPTTPAWGTESTTMNGNDQALPLLCGKETMIS. Residues 34-54 form a helical membrane-spanning segment; the sequence is VFLILFIALVGLVGNAFVLWL. The Cytoplasmic portion of the chain corresponds to 55-63; the sequence is LGFRMRRNA. The helical transmembrane segment at 64 to 84 threads the bilayer; it reads FSVYVLSLAGADFLFLCFQMT. The Extracellular segment spans residues 85 to 96; that stretch reads SCLAYLINFFGS. Residues 97 to 116 form a helical membrane-spanning segment; it reads ISINIPSFFTVMTCAYLAGL. Over 117–143 the chain is Cytoplasmic; that stretch reads SMLSAISTERCLSVLWPIWYRCRRPRH. A helical membrane pass occupies residues 144 to 164; that stretch reads LSAVMCVLLWALSLLLSILEG. The Extracellular portion of the chain corresponds to 165-183; it reads KFCGFLFSDDDPGWCQTFD. A helical transmembrane segment spans residues 184-204; it reads FITAAWLMFLFVVLCGSSLAL. At 205-227 the chain is on the cytoplasmic side; that stretch reads LVRILCGSRSLPLTRLYLTILLT. The helical transmembrane segment at 228-248 threads the bilayer; sequence VLIFLLCGLPFGIQWFLILWI. The Extracellular portion of the chain corresponds to 249–263; that stretch reads WKNSVVLFCHIHPIS. Residues 264–284 form a helical membrane-spanning segment; the sequence is VVLSSFNSSANPIIYFFVGSF. The Cytoplasmic portion of the chain corresponds to 285–329; the sequence is RKQWRLRQPILKLALQRALQDTAEVDHSEGCFSQGTLEMSRSSLV.

Belongs to the G-protein coupled receptor 1 family. Mas subfamily.

The protein localises to the cell membrane. Mast cell-specific receptor for basic secretagogues, i.e. cationic amphiphilic drugs, as well as endo- or exogenous peptides, consisting of a basic head group and a hydrophobic core. Recognizes and binds small molecules containing a cyclized tetrahydroisoquinoline (THIQ), such as non-steroidal neuromuscular blocking drugs (NMBDs), including tubocurarine and atracurium. In response to these compounds, mediates pseudo-allergic reactions characterized by histamine release, inflammation and airway contraction. This is Mas-related G-protein coupled receptor member X2 (MRGPRX2) from Macaca mulatta (Rhesus macaque).